Reading from the N-terminus, the 460-residue chain is Bifunctional protein GlmU (460 aa).

The pyrophosphorylase stretch occupies residues 1-232; it reads MALNVVILAA…AIEVEGANNR (232 aa). Residues 8-11, K22, Q73, 78-79, 100-102, G137, E157, N172, and N230 each bind UDP-N-acetyl-alpha-D-glucosamine; these read LAAG, GT, and YGD. D102 is a Mg(2+) binding site. N230 is a binding site for Mg(2+). The tract at residues 233 to 253 is linker; the sequence is VQLAQLERAYQAREAEKLMLA. Positions 254–460 are N-acetyltransferase; the sequence is GANLRDPSRI…GWQRPVKIKK (207 aa). UDP-N-acetyl-alpha-D-glucosamine-binding residues include R336 and K354. Residue H366 is the Proton acceptor of the active site. The UDP-N-acetyl-alpha-D-glucosamine site is built by Y369 and N380. Residues A383, 389–390, S408, A426, and R443 contribute to the acetyl-CoA site; that span reads NY.

This sequence in the N-terminal section; belongs to the N-acetylglucosamine-1-phosphate uridyltransferase family. The protein in the C-terminal section; belongs to the transferase hexapeptide repeat family. In terms of assembly, homotrimer. Mg(2+) serves as cofactor.

It is found in the cytoplasm. It carries out the reaction alpha-D-glucosamine 1-phosphate + acetyl-CoA = N-acetyl-alpha-D-glucosamine 1-phosphate + CoA + H(+). It catalyses the reaction N-acetyl-alpha-D-glucosamine 1-phosphate + UTP + H(+) = UDP-N-acetyl-alpha-D-glucosamine + diphosphate. It participates in nucleotide-sugar biosynthesis; UDP-N-acetyl-alpha-D-glucosamine biosynthesis; N-acetyl-alpha-D-glucosamine 1-phosphate from alpha-D-glucosamine 6-phosphate (route II): step 2/2. The protein operates within nucleotide-sugar biosynthesis; UDP-N-acetyl-alpha-D-glucosamine biosynthesis; UDP-N-acetyl-alpha-D-glucosamine from N-acetyl-alpha-D-glucosamine 1-phosphate: step 1/1. It functions in the pathway bacterial outer membrane biogenesis; LPS lipid A biosynthesis. Functionally, catalyzes the last two sequential reactions in the de novo biosynthetic pathway for UDP-N-acetylglucosamine (UDP-GlcNAc). The C-terminal domain catalyzes the transfer of acetyl group from acetyl coenzyme A to glucosamine-1-phosphate (GlcN-1-P) to produce N-acetylglucosamine-1-phosphate (GlcNAc-1-P), which is converted into UDP-GlcNAc by the transfer of uridine 5-monophosphate (from uridine 5-triphosphate), a reaction catalyzed by the N-terminal domain. This Shewanella baltica (strain OS195) protein is Bifunctional protein GlmU.